A 513-amino-acid chain; its full sequence is Glycogen synthase (513 aa).

Lys47 is an ADP-alpha-D-glucose binding site.

This sequence belongs to the glycosyltransferase 1 family. Bacterial/plant glycogen synthase subfamily.

The catalysed reaction is [(1-&gt;4)-alpha-D-glucosyl](n) + ADP-alpha-D-glucose = [(1-&gt;4)-alpha-D-glucosyl](n+1) + ADP + H(+). It participates in glycan biosynthesis; glycogen biosynthesis. In terms of biological role, synthesizes alpha-1,4-glucan chains using ADP-glucose. This is Glycogen synthase from Pseudomonas aeruginosa (strain ATCC 15692 / DSM 22644 / CIP 104116 / JCM 14847 / LMG 12228 / 1C / PRS 101 / PAO1).